A 111-amino-acid chain; its full sequence is Probable 4-amino-4-deoxy-L-arabinose-phosphoundecaprenol flippase subunit ArnE (111 aa).

The Cytoplasmic portion of the chain corresponds to 1–35; that stretch reads MIWLTLVFASLLSVAGQLCQKQATCFVAINKRRKH. The chain crosses the membrane as a helical span at residues 36–56; that stretch reads IVLWLGLALACLGLAMVLWLL. Residues 40 to 109 form the EamA domain; it reads LGLALACLGL…IIGGIVILGS (70 aa). At 57-60 the chain is on the periplasmic side; the sequence is VLQN. The helical transmembrane segment at 61–81 threads the bilayer; that stretch reads VPVGIAYPMLSLNFVWVTLAA. The Cytoplasmic segment spans residues 82-87; that stretch reads VKLWHE. The helical transmembrane segment at 88 to 108 threads the bilayer; that stretch reads PVSPRHWCGVAFIIGGIVILG. Topologically, residues 109-111 are periplasmic; the sequence is STV.

Belongs to the ArnE family. As to quaternary structure, heterodimer of ArnE and ArnF.

It is found in the cell inner membrane. Its pathway is bacterial outer membrane biogenesis; lipopolysaccharide biosynthesis. Functionally, translocates 4-amino-4-deoxy-L-arabinose-phosphoundecaprenol (alpha-L-Ara4N-phosphoundecaprenol) from the cytoplasmic to the periplasmic side of the inner membrane. The sequence is that of Probable 4-amino-4-deoxy-L-arabinose-phosphoundecaprenol flippase subunit ArnE from Escherichia coli (strain ATCC 8739 / DSM 1576 / NBRC 3972 / NCIMB 8545 / WDCM 00012 / Crooks).